A 133-amino-acid chain; its full sequence is Basic leucine zipper transcriptional factor ATF-like 3 (133 aa).

Positions 1-68 are disordered; the sequence is MSQGPPAGGV…EHESLEQENS (68 aa). Serine 2 and serine 24 each carry phosphoserine. Residues 11–24 show a composition bias toward polar residues; the sequence is LQSSVAAPGNQPQS. In terms of domain architecture, bZIP spans 28 to 91; it reads DDRKVRRREK…RHLTEALKEH (64 aa). The tract at residues 30-55 is basic motif; sequence RKVRRREKNRVAAQRSRKKQTQKSDK. Residues 51 to 68 show a composition bias toward basic and acidic residues; it reads QKSDKLHEEHESLEQENS. Residues 56–84 are leucine-zipper; that stretch reads LHEEHESLEQENSVLRREIAKLKEELRHL.

This sequence belongs to the bZIP family. Heterodimer; heterodimerizes with JUN family proteins. Interacts with JUN. As to expression, ubiquitously expressed.

Its subcellular location is the nucleus. AP-1 family transcription factor that controls the differentiation of CD8(+) thymic conventional dendritic cells in the immune system. Acts via the formation of a heterodimer with JUN family proteins that recognizes and binds DNA sequence 5'-TGA[CG]TCA-3' and regulates expression of target genes. Required for development of CD8-alpha(+) classical dendritic cells (cDCs) and related CD103(+) dendritic cells that cross-present antigens to CD8 T-cells and produce interleukin-12 (IL12) in response to pathogens. The protein is Basic leucine zipper transcriptional factor ATF-like 3 (Batf3) of Rattus norvegicus (Rat).